The chain runs to 487 residues: Cobyric acid synthase (487 aa).

Residues Val248–Ser435 form the GATase cobBQ-type domain. The Nucleophile role is filled by Cys329. His427 is an active-site residue.

Belongs to the CobB/CobQ family. CobQ subfamily.

It participates in cofactor biosynthesis; adenosylcobalamin biosynthesis. Its function is as follows. Catalyzes amidations at positions B, D, E, and G on adenosylcobyrinic A,C-diamide. NH(2) groups are provided by glutamine, and one molecule of ATP is hydrogenolyzed for each amidation. The protein is Cobyric acid synthase of Pseudomonas entomophila (strain L48).